Reading from the N-terminus, the 156-residue chain is Large ribosomal subunit protein uL23 (156 aa).

Basic and acidic residues predominate over residues 1–19 (MAPKAKKEAPAPPKVEAKA). Residues 1 to 67 (MAPKAKKEAP…PKYPRKSAPR (67 aa)) are disordered. The residue at position 2 (Ala-2) is a N,N,N-trimethylalanine. Lys-14 is covalently cross-linked (Glycyl lysine isopeptide (Lys-Gly) (interchain with G-Cter in SUMO2)). Residues 20-67 (KALKAKKAVLKGVHSHKKKKIRTSPTFRRPKTLRLRRQPKYPRKSAPR) show a composition bias toward basic residues. A beta-like import receptor binding (BIB) domain region spans residues 32 to 74 (VHSHKKKKIRTSPTFRRPKTLRLRRQPKYPRKSAPRRNKLDHY). Citrulline is present on Arg-41. At Ser-43 the chain carries Phosphoserine. Residue Thr-45 is modified to Phosphothreonine. An N6-acetyllysine modification is found at Lys-70.

This sequence belongs to the universal ribosomal protein uL23 family. As to quaternary structure, component of the large ribosomal subunit. Interacts with LYAR and GNL2. Interacts with MDM2; this interaction may promote MDM2-mediated p53/TP53 polyubiquitination. Directly interacts (via BIB domain) with IPO5, IPO7, KPNB1 and TNPO1; these interactions are involved in RPL23A nuclear import for the assembly of ribosomal subunits. Interacts with IPO8. Post-translationally, N-terminus is methylated by METTL11A/NTM1. Citrullinated by PADI4.

The protein resides in the cytoplasm. Its subcellular location is the nucleus. Functionally, component of the large ribosomal subunit. The ribosome is a large ribonucleoprotein complex responsible for the synthesis of proteins in the cell. Binds a specific region on the 26S rRNA. May promote p53/TP53 degradation possibly through the stimulation of MDM2-mediated TP53 polyubiquitination. This Oryctolagus cuniculus (Rabbit) protein is Large ribosomal subunit protein uL23 (RPL23A).